Reading from the N-terminus, the 846-residue chain is Rho GTPase-activating protein 12 (846 aa).

Positions Pro12–Arg74 constitute an SH3 domain. Polar residues predominate over residues Leu152–Arg175. The interval Leu152–Pro241 is disordered. 2 positions are modified to phosphoserine: Ser165 and Ser176. Polar residues predominate over residues Thr191–Asp200. Ser201, Ser213, and Ser215 each carry phosphoserine. A compositionally biased stretch (polar residues) spans Thr224–Asn234. Phosphothreonine is present on residues Thr230 and Thr231. Phosphoserine is present on Ser240. Tyr243 is subject to Phosphotyrosine. WW domains are found at residues Ile265–Trp298 and Asp358–Tyr391. The tract at residues Trp293 to Glu316 is disordered. Disordered regions lie at residues Asp428–Lys466 and Glu580–Asn629. The span at Asn445–Pro461 shows a compositional bias: polar residues. The 113-residue stretch at Asp463–Asn575 folds into the PH domain. Over residues Glu580–Pro590 the composition is skewed to acidic residues. At Ser592 the chain carries Phosphoserine. Residues Gly594–Lys609 show a composition bias toward basic and acidic residues. In terms of domain architecture, Rho-GAP spans Ser656–Phe844.

Its function is as follows. GTPase activator for the Rho-type GTPases by converting them to an inactive GDP-bound state. This chain is Rho GTPase-activating protein 12 (ARHGAP12), found in Homo sapiens (Human).